Consider the following 41-residue polypeptide: Photosystem I reaction center subunit IX (41 aa).

The chain crosses the membrane as a helical span at residues 7-27 (YLSTAPVIALAWMSFTAGLLI).

The protein belongs to the PsaJ family.

The protein resides in the plastid. The protein localises to the chloroplast thylakoid membrane. Functionally, may help in the organization of the PsaE and PsaF subunits. In Tupiella akineta (Green alga), this protein is Photosystem I reaction center subunit IX.